The chain runs to 306 residues: Porphobilinogen deaminase (306 aa).

Position 239 is an S-(dipyrrolylmethanemethyl)cysteine (cysteine 239).

This sequence belongs to the HMBS family. In terms of assembly, monomer. It depends on dipyrromethane as a cofactor.

It carries out the reaction 4 porphobilinogen + H2O = hydroxymethylbilane + 4 NH4(+). It participates in porphyrin-containing compound metabolism; protoporphyrin-IX biosynthesis; coproporphyrinogen-III from 5-aminolevulinate: step 2/4. Its function is as follows. Tetrapolymerization of the monopyrrole PBG into the hydroxymethylbilane pre-uroporphyrinogen in several discrete steps. The protein is Porphobilinogen deaminase (hemC) of Helicobacter pylori (strain J99 / ATCC 700824) (Campylobacter pylori J99).